Consider the following 219-residue polypeptide: Melanoma-associated antigen H1 (219 aa).

Positions 1 to 13 (MPRGRKSRRRRNA) are enriched in basic residues. The tract at residues 1-84 (MPRGRKSRRR…QKPSVPRSNF (84 aa)) is disordered. The 198-residue stretch at 1 to 198 (MPRGRKSRRR…KDWPCNYDWD (198 aa)) folds into the MAGE domain. The span at 44-57 (PEDDLSGPEEDPST) shows a compositional bias: acidic residues. Residues 58–74 (PEEASTTPEEASSTAQA) show a composition bias toward low complexity. Tyr-195 carries the phosphotyrosine modification.

In Homo sapiens (Human), this protein is Melanoma-associated antigen H1 (MAGEH1).